A 39-amino-acid chain; its full sequence is Photosystem II reaction center protein L (39 aa).

The chain crosses the membrane as a helical span at residues 18–38 (SLYLGLLSVLVLGILFSSYFF).

The protein belongs to the PsbL family. As to quaternary structure, PSII is composed of 1 copy each of membrane proteins PsbA, PsbB, PsbC, PsbD, PsbE, PsbF, PsbH, PsbI, PsbJ, PsbK, PsbL, PsbM, PsbT, PsbX, PsbY, Psb30/Ycf12, peripheral proteins PsbO, CyanoQ (PsbQ), PsbU, PsbV and a large number of cofactors. It forms dimeric complexes.

The protein localises to the cellular thylakoid membrane. Its function is as follows. One of the components of the core complex of photosystem II (PSII). PSII is a light-driven water:plastoquinone oxidoreductase that uses light energy to abstract electrons from H(2)O, generating O(2) and a proton gradient subsequently used for ATP formation. It consists of a core antenna complex that captures photons, and an electron transfer chain that converts photonic excitation into a charge separation. This subunit is found at the monomer-monomer interface and is required for correct PSII assembly and/or dimerization. This is Photosystem II reaction center protein L from Prochlorococcus marinus subsp. pastoris (strain CCMP1986 / NIES-2087 / MED4).